The chain runs to 292 residues: NAD kinase (292 aa).

The active-site Proton acceptor is the aspartate 73. Residues 73-74 (DG), 147-148 (NE), histidine 158, arginine 175, aspartate 177, 188-193 (TAYSLS), and glutamine 247 each bind NAD(+).

The protein belongs to the NAD kinase family. Requires a divalent metal cation as cofactor.

The protein localises to the cytoplasm. It carries out the reaction NAD(+) + ATP = ADP + NADP(+) + H(+). Involved in the regulation of the intracellular balance of NAD and NADP, and is a key enzyme in the biosynthesis of NADP. Catalyzes specifically the phosphorylation on 2'-hydroxyl of the adenosine moiety of NAD to yield NADP. This is NAD kinase from Sodalis glossinidius (strain morsitans).